Reading from the N-terminus, the 493-residue chain is Cytochrome P450 monooxygenase mfmF (493 aa).

2 helical membrane-spanning segments follow: residues 3–23 and 301–321; these read SLIPLTAIVLVLVAILHRLFF and VLFAGADSTAVMLATILFHLV. Cys440 provides a ligand contact to heme.

It belongs to the cytochrome P450 family. It depends on heme as a cofactor.

It localises to the membrane. It functions in the pathway secondary metabolite biosynthesis; terpenoid biosynthesis. Cytochrome P450 monooxygenase; part of the gene cluster that mediates the biosynthesis of the phthalide-terpenoid hybrid 11'-O-desmethylfendlerol. Within the pathway, mfmF catalyzes C-3 hydroxylation of 5-hydroxy-4-(hydroxymethyl)-7-methoxy-6-methylphthalide to yield cyclopolic acid. The biosynthesis of 11'-O-desmethylfendlerol begins with the NR-PKS mfmB that forms 3,5-dimethylorsellinic acid (DMOA), which is then transformed into the phthalide 5,7-dihydroxy-4-(hydroxymethyl)-6-methylphthalide by the cytochrome P450 monooxygenase mfmA and the hydrolase mfmC. Subsequently, the methyltransferase mfmE catalyzes 7-O-methylation to yield 5-hydroxy-4-(hydroxymethyl)-7-methoxy-6-methylphthalide, which undergoes C-3 hydroxylation by the cytochrome P450 monooxygenase mfmF. The resultant cyclopolic acid (2,5-dihydroxy-4-(hydroxymethyl)-7-methoxy-6-methylphthalide) is then farnesylated by the DMATS-type prenyltransferase mfmD to afford 5-O-farnesylcyclopolic acid. Finally, the Pyr4-family terpene cyclase mfmH cyclizes the farnesyl moiety of 5-O-farnesylcyclopolic acid into a drimane-like structure, thus completing the biosynthesis of 11'-O-desmethylfendlerol. This chain is Cytochrome P450 monooxygenase mfmF, found in Annulohypoxylon moriforme (Filamentous fungus).